The following is a 367-amino-acid chain: Glutamate 5-kinase (367 aa).

Lys-10 lines the ATP pocket. 3 residues coordinate substrate: Ser-50, Asp-137, and Asn-149. Residues 169 to 170 (TD) and 211 to 217 (TGGMSTK) contribute to the ATP site. The 79-residue stretch at 275–353 (AGEITVDDGA…QQIAEILGYE (79 aa)) folds into the PUA domain.

This sequence belongs to the glutamate 5-kinase family.

It is found in the cytoplasm. The enzyme catalyses L-glutamate + ATP = L-glutamyl 5-phosphate + ADP. The protein operates within amino-acid biosynthesis; L-proline biosynthesis; L-glutamate 5-semialdehyde from L-glutamate: step 1/2. Functionally, catalyzes the transfer of a phosphate group to glutamate to form L-glutamate 5-phosphate. This is Glutamate 5-kinase from Pectobacterium carotovorum subsp. carotovorum (strain PC1).